Reading from the N-terminus, the 87-residue chain is UPF0250 protein YPK_3025 (87 aa).

Belongs to the UPF0250 family.

This Yersinia pseudotuberculosis serotype O:3 (strain YPIII) protein is UPF0250 protein YPK_3025.